The chain runs to 66 residues: Large ribosomal subunit protein uL29 (66 aa).

The protein belongs to the universal ribosomal protein uL29 family.

This is Large ribosomal subunit protein uL29 from Rhizobium leguminosarum bv. trifolii (strain WSM2304).